The following is a 428-amino-acid chain: Adenylosuccinate synthetase (428 aa).

Residues 12 to 18 (GDEGKGK) and 40 to 42 (GHT) contribute to the GTP site. Asp13 serves as the catalytic Proton acceptor. Mg(2+) contacts are provided by Asp13 and Gly40. IMP contacts are provided by residues 13 to 16 (DEGK), 38 to 41 (NAGH), Thr129, Arg143, Gln224, Thr239, and Arg303. His41 serves as the catalytic Proton donor. 299 to 305 (VTTGRIR) contacts substrate. Residues Arg305, 331–333 (KVD), and 410–412 (AYG) each bind GTP.

Belongs to the adenylosuccinate synthetase family. As to quaternary structure, homodimer. It depends on Mg(2+) as a cofactor.

The protein resides in the cytoplasm. The catalysed reaction is IMP + L-aspartate + GTP = N(6)-(1,2-dicarboxyethyl)-AMP + GDP + phosphate + 2 H(+). Its pathway is purine metabolism; AMP biosynthesis via de novo pathway; AMP from IMP: step 1/2. Functionally, plays an important role in the de novo pathway of purine nucleotide biosynthesis. Catalyzes the first committed step in the biosynthesis of AMP from IMP. The sequence is that of Adenylosuccinate synthetase from Francisella philomiragia subsp. philomiragia (strain ATCC 25017 / CCUG 19701 / FSC 153 / O#319-036).